The chain runs to 457 residues: BAG family molecular chaperone regulator 4 (457 aa).

The tract at residues 1–101 (MSALRRSGYG…QPPYPSYNSN (101 aa)) is disordered. The residue at position 7 (Ser-7) is a Phosphoserine. Low complexity predominate over residues 8-20 (GYGPSDGPSYGRY). Over residues 30 to 47 (VHPPPPLYPLRPEPPQPP) the composition is skewed to pro residues. An omega-N-methylarginine mark is found at Arg-40, Arg-53, and Arg-108. 3 disordered regions span residues 113–136 (YPST…NGAY), 166–333 (STEV…DDSD), and 347–377 (LYGN…ESTP). A compositionally biased stretch (polar residues) spans 166–182 (STEVPSTYRSSGNSPTP). Position 185 is an omega-N-methylarginine (Arg-185). 2 stretches are compositionally biased toward low complexity: residues 274-284 (STSPWPSSGSP) and 294-308 (QPKD…SDQS). Composition is skewed to polar residues over residues 320–333 (QYES…DDSD) and 347–365 (LYGN…SSSL). The BAG domain maps to 379–456 (SIKKIIHVLE…AILEKLEKKG (78 aa)).

In terms of assembly, binds to the ATPase domain of HSP/HSC70 chaperones. Binds to the death domain of TNFRSF1A in the absence of TNF and thereby prevents binding of adapter molecules such as TRADD or TRAF2. Binds to the death domain of TNFRSF12. Interacts with PRKN. In terms of tissue distribution, ubiquitous.

It is found in the cytoplasm. Functionally, inhibits the chaperone activity of HSP70/HSC70 by promoting substrate release. Prevents constitutive TNFRSF1A signaling. Negative regulator of PRKN translocation to damaged mitochondria. This is BAG family molecular chaperone regulator 4 (BAG4) from Homo sapiens (Human).